The following is a 396-amino-acid chain: Pectate lyase 5 (396 aa).

The signal sequence occupies residues 1-25; sequence MGIKHCCYILYFTLALVTLLQPVRS. Residue asparagine 36 is glycosylated (N-linked (GlcNAc...) asparagine). A disulfide bridge connects residues cysteine 53 and cysteine 70. Positions 193, 217, and 221 each coordinate Ca(2+). Residue arginine 273 is part of the active site.

It belongs to the polysaccharide lyase 1 family. Amb a subfamily. In terms of assembly, monomer. The cofactor is Ca(2+). The N-terminus is blocked. As to expression, pollen and flowers.

It carries out the reaction Eliminative cleavage of (1-&gt;4)-alpha-D-galacturonan to give oligosaccharides with 4-deoxy-alpha-D-galact-4-enuronosyl groups at their non-reducing ends.. The protein operates within glycan metabolism; pectin degradation; 2-dehydro-3-deoxy-D-gluconate from pectin: step 2/5. Functionally, has pectate lyase activity. The protein is Pectate lyase 5 of Ambrosia artemisiifolia (Common ragweed).